A 780-amino-acid polypeptide reads, in one-letter code: ATP-dependent 6-phosphofructokinase, liver type (780 aa).

Alanine 2 is modified (N-acetylalanine). The segment at 2 to 390 (ATVDLEKLRM…NWKIYKLLAH (389 aa)) is N-terminal catalytic PFK domain 1. Residues glycine 25, 88–89 (RC), and 118–121 (GDGS) contribute to the ATP site. Aspartate 119 contributes to the Mg(2+) binding site. Substrate is bound by residues 164-166 (SID), arginine 201, 208-210 (MGR), glutamate 264, arginine 292, and 298-301 (HVQR). Catalysis depends on aspartate 166, which acts as the Proton acceptor. Serine 377 carries the phosphoserine modification. The interdomain linker stretch occupies residues 391-400 (QKVSKEKSNF). Positions 401-780 (SLAILNVGAP…RRTLSIDKGF (380 aa)) are C-terminal regulatory PFK domain 2. Beta-D-fructose 2,6-bisphosphate contacts are provided by residues arginine 470, 527-531 (TISNN), arginine 565, 572-574 (MGG), and glutamate 628. A glycan (O-linked (GlcNAc) serine) is linked at serine 529. A Phosphotyrosine modification is found at tyrosine 640. Residues arginine 654, 660-663 (HLQQ), and arginine 734 contribute to the beta-D-fructose 2,6-bisphosphate site. Serine 775 carries the post-translational modification Phosphoserine.

It belongs to the phosphofructokinase type A (PFKA) family. ATP-dependent PFK group I subfamily. Eukaryotic two domain clade 'E' sub-subfamily. Homo- and heterotetramers. Phosphofructokinase (PFK) enzyme functions as a tetramer composed of different combinations of 3 types of subunits, called PFKM (M), PFKL (L) and PFKP (P). The composition of the PFK tetramer differs according to the tissue type it is present in. The kinetic and regulatory properties of the tetrameric enzyme are dependent on the subunit composition, hence can vary across tissues. Requires Mg(2+) as cofactor. Post-translationally, glcNAcylation at Ser-529 by OGT decreases enzyme activity, leading to redirect glucose flux through the oxidative pentose phosphate pathway. Glycosylation is stimulated by both hypoxia and glucose deprivation.

The protein localises to the cytoplasm. The catalysed reaction is beta-D-fructose 6-phosphate + ATP = beta-D-fructose 1,6-bisphosphate + ADP + H(+). The protein operates within carbohydrate degradation; glycolysis; D-glyceraldehyde 3-phosphate and glycerone phosphate from D-glucose: step 3/4. Its activity is regulated as follows. Allosterically activated by ADP, AMP, or fructose 2,6-bisphosphate, and allosterically inhibited by ATP or citrate. GlcNAcylation by OGT overcomes allosteric regulation. Catalyzes the phosphorylation of D-fructose 6-phosphate to fructose 1,6-bisphosphate by ATP, the first committing step of glycolysis. Negatively regulates the phagocyte oxidative burst in response to bacterial infection by controlling cellular NADPH biosynthesis and NADPH oxidase-derived reactive oxygen species. Upon macrophage activation, drives the metabolic switch toward glycolysis, thus preventing glucose turnover that produces NADPH via pentose phosphate pathway. This chain is ATP-dependent 6-phosphofructokinase, liver type, found in Mus musculus (Mouse).